A 207-amino-acid chain; its full sequence is Small ribosomal subunit protein uS3c (207 aa).

Residues 39 to 109 (IRDYIFTNLL…QLKINIIDVT (71 aa)) enclose the KH type-2 domain.

The protein belongs to the universal ribosomal protein uS3 family. In terms of assembly, part of the 30S ribosomal subunit.

The protein localises to the plastid. Its subcellular location is the chloroplast. The protein is Small ribosomal subunit protein uS3c (rps3) of Cyanidium caldarium (Red alga).